An 823-amino-acid polypeptide reads, in one-letter code: Degenerin-like protein asic-1 (823 aa).

Over Met-1 to Tyr-38 the chain is Cytoplasmic. Residues Met-39–Val-59 traverse the membrane as a helical segment. At Glu-60–Gly-767 the chain is on the extracellular side. 2 cysteine pairs are disulfide-bonded: Cys-86–Cys-518 and Cys-494–Cys-501. Residues Asn-228, Asn-326, Asn-347, Asn-415, and Asn-486 are each glycosylated (N-linked (GlcNAc...) asparagine). 2 N-linked (GlcNAc...) asparagine glycosylation sites follow: Asn-527 and Asn-546. 4 cysteine pairs are disulfide-bonded: Cys-604-Cys-687, Cys-625-Cys-683, Cys-629-Cys-681, and Cys-638-Cys-664. The short motif at Gly-767–Ser-769 is the GAS motif; ion selectivity filter element. The chain crosses the membrane as a helical span at residues Val-768–Ile-788. Topologically, residues Ser-789–Arg-795 are cytoplasmic.

It belongs to the amiloride-sensitive sodium channel (TC 1.A.6) family. In terms of assembly, homotrimer. Heterotrimer; with other ASIC proteins producing channel with different properties.

It localises to the cell membrane. It is found in the postsynaptic cell membrane. The protein resides in the cell projection. The protein localises to the dendrite. It carries out the reaction Na(+)(in) = Na(+)(out). The catalysed reaction is K(+)(in) = K(+)(out). It catalyses the reaction Li(+)(in) = Li(+)(out). The enzyme catalyses Ca(2+)(in) = Ca(2+)(out). Functionally, forms voltage-independent, pH-gated trimeric sodium channels that act as postsynaptic excitatory receptors in the nervous system, playing a crucial role in regulating synaptic plasticity, learning, and memory. Promotes synaptic vesicle fusion to positively regulate the release of dopamine at dopaminergic neuron synapses. Displays high selectivity for sodium ions but can also permit the permeation of other cations. This chain is Degenerin-like protein asic-1, found in Caenorhabditis elegans.